The following is a 192-amino-acid chain: Xanthine phosphoribosyltransferase (192 aa).

Xanthine contacts are provided by leucine 20 and asparagine 27. Position 128 to 132 (alanine 128 to alanine 132) interacts with 5-phospho-alpha-D-ribose 1-diphosphate. A xanthine-binding site is contributed by lysine 156.

It belongs to the purine/pyrimidine phosphoribosyltransferase family. Xpt subfamily. As to quaternary structure, homodimer.

It localises to the cytoplasm. The catalysed reaction is XMP + diphosphate = xanthine + 5-phospho-alpha-D-ribose 1-diphosphate. It participates in purine metabolism; XMP biosynthesis via salvage pathway; XMP from xanthine: step 1/1. Its function is as follows. Converts the preformed base xanthine, a product of nucleic acid breakdown, to xanthosine 5'-monophosphate (XMP), so it can be reused for RNA or DNA synthesis. This is Xanthine phosphoribosyltransferase from Lactobacillus acidophilus (strain ATCC 700396 / NCK56 / N2 / NCFM).